The following is a 511-amino-acid chain: Glutamyl-tRNA(Gln) amidotransferase subunit B, mitochondrial (511 aa).

The N-terminal 6 residues, 1–6 (MLRRYL), are a transit peptide targeting the mitochondrion.

Belongs to the GatB/GatE family. GatB subfamily. As to quaternary structure, subunit of the heterotrimeric GatFAB amidotransferase (AdT) complex, composed of A, B and F subunits.

It is found in the mitochondrion. The enzyme catalyses L-glutamyl-tRNA(Gln) + L-glutamine + ATP + H2O = L-glutaminyl-tRNA(Gln) + L-glutamate + ADP + phosphate + H(+). In terms of biological role, allows the formation of correctly charged Gln-tRNA(Gln) through the transamidation of misacylated Glu-tRNA(Gln) in the mitochondria. The reaction takes place in the presence of glutamine and ATP through an activated gamma-phospho-Glu-tRNA(Gln). The sequence is that of Glutamyl-tRNA(Gln) amidotransferase subunit B, mitochondrial from Lodderomyces elongisporus (strain ATCC 11503 / CBS 2605 / JCM 1781 / NBRC 1676 / NRRL YB-4239) (Yeast).